The chain runs to 275 residues: uncharacterized protein (275 aa).

The 162-residue stretch at 1 to 162 (NLFSVIVSLI…ITSYWTEVQR (162 aa)) folds into the ABC transmembrane type-1 domain. 3 helical membrane-spanning segments follow: residues 21 to 41 (LYLVCTLPILIIVILPIGNIM), 106 to 126 (IMNLILFINIFGILFLGYYLM), and 137 to 157 (FAYVLYLFQIINPIVSITSYW).

The protein localises to the cell membrane. This is an uncharacterized protein from Staphylococcus epidermidis.